We begin with the raw amino-acid sequence, 102 residues long: Small ribosomal subunit protein uS10 (102 aa).

The protein belongs to the universal ribosomal protein uS10 family. Part of the 30S ribosomal subunit.

Functionally, involved in the binding of tRNA to the ribosomes. The polypeptide is Small ribosomal subunit protein uS10 (Latilactobacillus sakei subsp. sakei (strain 23K) (Lactobacillus sakei subsp. sakei)).